The primary structure comprises 215 residues: GTP-binding nuclear protein Ran (215 aa).

One can recognise a Small GTPase Ran-type domain in the interval 6 to 170; the sequence is DIPTFKLVLV…LWLVRKLLGD (165 aa). GTP-binding positions include 17-24, 35-41, G67, 121-124, and 149-151; these read DGGTGKTT, EKKYVAT, NFVD, and SAK. The interval 36-44 is switch-I; that stretch reads KKYVATLGV. A switch-II region spans residues 67 to 83; that stretch reads GQEKFGGLRDGYYIQGQ. The interaction with RANBP1 stretch occupies residues 210-215; the sequence is DDDEDL.

The protein belongs to the small GTPase superfamily. Ran family. As to quaternary structure, monomer. Interacts with RANGAP1, which promotes RAN-mediated GTP hydrolysis. Interacts with KPNB1. Interaction with KPNB1 inhibits RANGAP1-mediated stimulation of GTPase activity. Interacts with RCC1 which promotes the exchange of RAN-bound GDP by GTP. Interaction with KPNB1 inhibits RCC1-mediated exchange of RAN-bound GDP by GTP. Interacts (GTP-bound form) with TNPO1; the interaction is direct. Interacts with KPNB1 and with TNPO1; both inhibit RAN GTPase activity. Interacts (via C-terminus) with RANBP1, which alleviates the inhibition of RAN GTPase activity. Interacts with RANGRF, which promotes the release of bound guanine nucleotide. RANGRF and RCC1 compete for an overlapping binding site on RAN. Identified in a complex with KPNA2 and CSE1L; interaction with RANBP1 mediates dissociation of RAN from this complex. Interaction with both RANBP1 and KPNA2 promotes dissociation of the complex between RAN and KPNB1. Identified in a complex composed of RAN, RANGAP1 and RANBP1. Identified in a complex that contains TNPO1, RAN and RANBP1. Identified in a nuclear export complex with XPO1. Interaction with RANBP1 or RANBP2 induces a conformation change in the complex formed by XPO1 and RAN that triggers the release of the nuclear export signal of cargo proteins. Component of a nuclear export receptor complex composed of KPNB1, RAN, SNUPN and XPO1. Mg(2+) is required as a cofactor.

It is found in the nucleus. It localises to the nucleus envelope. The protein localises to the cytoplasm. The protein resides in the cytosol. Functionally, GTPase involved in nucleocytoplasmic transport, participating both to the import and the export from the nucleus of proteins and RNAs. Switches between a cytoplasmic GDP- and a nuclear GTP-bound state by nucleotide exchange and GTP hydrolysis. Nuclear import receptors such as importin beta bind their substrates only in the absence of GTP-bound RAN and release them upon direct interaction with GTP-bound RAN, while export receptors behave in the opposite way. Thereby, RAN controls cargo loading and release by transport receptors in the proper compartment and ensures the directionality of the transport. Interaction with RANBP1 induces a conformation change in the complex formed by XPO1 and RAN that triggers the release of the nuclear export signal of cargo proteins. RAN (GTP-bound form) triggers microtubule assembly at mitotic chromosomes and is required for normal mitotic spindle assembly and chromosome segregation. Required for normal progress through mitosis. The protein is GTP-binding nuclear protein Ran (ran-1) of Onchocerca volvulus.